Reading from the N-terminus, the 835-residue chain is Replication origin-binding protein (835 aa).

The region spanning 54-215 (PGMSQTRPVT…SGLRGDENIH (162 aa)) is the Helicase ATP-binding domain. Position 67–74 (67–74 (APMGSGKT)) interacts with ATP.

The protein belongs to the herpesviridae OriBP family. In terms of assembly, homodimer. Interacts with the major DNA-binding protein. Interacts with the helicase/primase component 52 and the polymerase accessory protein.

The protein localises to the host nucleus. Its function is as follows. Functions as a docking protein to recruit essential components of the viral replication machinery to viral DNA origins. In the presence of the major DNA-binding protein, opens dsDNA leading to a conformational change in the origin that facilitates DNA unwinding and subsequent replication. This Varicella-zoster virus (strain Oka vaccine) (HHV-3) protein is Replication origin-binding protein.